The chain runs to 392 residues: GTPase Obg (392 aa).

The region spanning 1 to 159 is the Obg domain; it reads MKFVDEATIL…RDLQLELMLL (159 aa). Positions 127–148 are disordered; that stretch reads NTRFKSSVNRTPRQKTMGTPGD. The span at 129-143 shows a compositional bias: polar residues; it reads RFKSSVNRTPRQKTM. Positions 160–333 constitute an OBG-type G domain; the sequence is ADVGMLGMPN…LCWDVMTFII (174 aa). GTP is bound by residues 166–173, 191–195, 213–216, 283–286, and 314–316; these read GMPNAGKS, FTTLV, DIPG, NKID, and SAA. Ser173 and Thr193 together coordinate Mg(2+). The segment covering 362–386 has biased composition (acidic residues); that stretch reads EEAEAEAEDDEDWDDDWDEDDEEGV. The tract at residues 362–392 is disordered; sequence EEAEAEAEDDEDWDDDWDEDDEEGVEFIYKR.

This sequence belongs to the TRAFAC class OBG-HflX-like GTPase superfamily. OBG GTPase family. As to quaternary structure, monomer. It depends on Mg(2+) as a cofactor.

It localises to the cytoplasm. In terms of biological role, an essential GTPase which binds GTP, GDP and possibly (p)ppGpp with moderate affinity, with high nucleotide exchange rates and a fairly low GTP hydrolysis rate. Plays a role in control of the cell cycle, stress response, ribosome biogenesis and in those bacteria that undergo differentiation, in morphogenesis control. The polypeptide is GTPase Obg (Klebsiella pneumoniae subsp. pneumoniae (strain ATCC 700721 / MGH 78578)).